We begin with the raw amino-acid sequence, 355 residues long: Cobalt-precorrin-5B C(1)-methyltransferase (355 aa).

Belongs to the CbiD family.

The catalysed reaction is Co-precorrin-5B + S-adenosyl-L-methionine = Co-precorrin-6A + S-adenosyl-L-homocysteine. The protein operates within cofactor biosynthesis; adenosylcobalamin biosynthesis; cob(II)yrinate a,c-diamide from sirohydrochlorin (anaerobic route): step 6/10. Functionally, catalyzes the methylation of C-1 in cobalt-precorrin-5B to form cobalt-precorrin-6A. The protein is Cobalt-precorrin-5B C(1)-methyltransferase of Sulfolobus acidocaldarius (strain ATCC 33909 / DSM 639 / JCM 8929 / NBRC 15157 / NCIMB 11770).